The chain runs to 305 residues: Ribosomal RNA large subunit methyltransferase F (305 aa).

Belongs to the methyltransferase superfamily. METTL16/RlmF family.

It is found in the cytoplasm. It carries out the reaction adenosine(1618) in 23S rRNA + S-adenosyl-L-methionine = N(6)-methyladenosine(1618) in 23S rRNA + S-adenosyl-L-homocysteine + H(+). Its function is as follows. Specifically methylates the adenine in position 1618 of 23S rRNA. This Bacteroides fragilis (strain YCH46) protein is Ribosomal RNA large subunit methyltransferase F.